Reading from the N-terminus, the 207-residue chain is Ribosomal RNA small subunit methyltransferase G (207 aa).

Residues Gly75, Leu80, 126–127, and Arg141 contribute to the S-adenosyl-L-methionine site; that span reads VE.

The protein belongs to the methyltransferase superfamily. RNA methyltransferase RsmG family.

The protein resides in the cytoplasm. It carries out the reaction guanosine(527) in 16S rRNA + S-adenosyl-L-methionine = N(7)-methylguanosine(527) in 16S rRNA + S-adenosyl-L-homocysteine. Functionally, specifically methylates the N7 position of guanine in position 527 of 16S rRNA. The polypeptide is Ribosomal RNA small subunit methyltransferase G (Psychromonas ingrahamii (strain DSM 17664 / CCUG 51855 / 37)).